Consider the following 375-residue polypeptide: Histidine biosynthesis bifunctional protein HisB (375 aa).

Residues 1–168 (MTPILFVDRD…GIAHELADAP (168 aa)) are histidinol-phosphatase. The Nucleophile role is filled by Asp8. Positions 8, 10, and 128 each coordinate Mg(2+). Asp10 acts as the Proton donor in catalysis. The interval 169-375 (RRALVQRNTK…TALPTTKGTL (207 aa)) is imidazoleglycerol-phosphate dehydratase.

In the N-terminal section; belongs to the histidinol-phosphatase family. The protein in the C-terminal section; belongs to the imidazoleglycerol-phosphate dehydratase family. The cofactor is Mg(2+).

It is found in the cytoplasm. It carries out the reaction D-erythro-1-(imidazol-4-yl)glycerol 3-phosphate = 3-(imidazol-4-yl)-2-oxopropyl phosphate + H2O. The enzyme catalyses L-histidinol phosphate + H2O = L-histidinol + phosphate. It participates in amino-acid biosynthesis; L-histidine biosynthesis; L-histidine from 5-phospho-alpha-D-ribose 1-diphosphate: step 6/9. The protein operates within amino-acid biosynthesis; L-histidine biosynthesis; L-histidine from 5-phospho-alpha-D-ribose 1-diphosphate: step 8/9. This chain is Histidine biosynthesis bifunctional protein HisB, found in Xanthomonas axonopodis pv. citri (strain 306).